Here is a 217-residue protein sequence, read N- to C-terminus: Cytochrome c biogenesis ATP-binding export protein CcmA (217 aa).

Residues 6–216 (LQLEQLACQR…QYKFFDQGNM (211 aa)) enclose the ABC transporter domain. 38 to 45 (GHNGIGKT) is an ATP binding site.

Belongs to the ABC transporter superfamily. CcmA exporter (TC 3.A.1.107) family. The complex is composed of two ATP-binding proteins (CcmA) and two transmembrane proteins (CcmB).

The protein resides in the cell inner membrane. It catalyses the reaction heme b(in) + ATP + H2O = heme b(out) + ADP + phosphate + H(+). Its function is as follows. Part of the ABC transporter complex CcmAB involved in the biogenesis of c-type cytochromes; once thought to export heme, this seems not to be the case, but its exact role is uncertain. Responsible for energy coupling to the transport system. The protein is Cytochrome c biogenesis ATP-binding export protein CcmA of Histophilus somni (strain 129Pt) (Haemophilus somnus).